The sequence spans 207 residues: HTH-type transcriptional regulator BetI 2 (207 aa).

Residues 8 to 68 form the HTH tetR-type domain; it reads PIRRQQLIKA…ATMRQILTDL (61 aa). The H-T-H motif DNA-binding region spans 31 to 50; the sequence is TVMRIARHAGVSAGIISHYF.

It participates in amine and polyamine biosynthesis; betaine biosynthesis via choline pathway [regulation]. Repressor involved in the biosynthesis of the osmoprotectant glycine betaine. It represses transcription of the choline transporter BetT and the genes of BetAB involved in the synthesis of glycine betaine. This Chromohalobacter salexigens (strain ATCC BAA-138 / DSM 3043 / CIP 106854 / NCIMB 13768 / 1H11) protein is HTH-type transcriptional regulator BetI 2.